A 316-amino-acid polypeptide reads, in one-letter code: Putative ubiquitin-conjugating enzyme E2 39 (316 aa).

The UBC core domain maps to 57-217; the sequence is NWVKDIQKEW…VFVFSLKTMH (161 aa). The Glycyl thioester intermediate role is filled by Cys-143.

It belongs to the ubiquitin-conjugating enzyme family.

The enzyme catalyses S-ubiquitinyl-[E1 ubiquitin-activating enzyme]-L-cysteine + [E2 ubiquitin-conjugating enzyme]-L-cysteine = [E1 ubiquitin-activating enzyme]-L-cysteine + S-ubiquitinyl-[E2 ubiquitin-conjugating enzyme]-L-cysteine.. It participates in protein modification; protein ubiquitination. In terms of biological role, accepts the ubiquitin from the E1 complex and catalyzes its covalent attachment to other proteins. The polypeptide is Putative ubiquitin-conjugating enzyme E2 39 (UBC39) (Arabidopsis thaliana (Mouse-ear cress)).